We begin with the raw amino-acid sequence, 49 residues long: Large ribosomal subunit protein eL40 (49 aa).

It belongs to the eukaryotic ribosomal protein eL40 family.

In Methanosarcina acetivorans (strain ATCC 35395 / DSM 2834 / JCM 12185 / C2A), this protein is Large ribosomal subunit protein eL40.